Here is a 100-residue protein sequence, read N- to C-terminus: Large ribosomal subunit protein uL23 (100 aa).

The protein belongs to the universal ribosomal protein uL23 family. Part of the 50S ribosomal subunit. Contacts protein L29, and trigger factor when it is bound to the ribosome.

In terms of biological role, one of the early assembly proteins it binds 23S rRNA. One of the proteins that surrounds the polypeptide exit tunnel on the outside of the ribosome. Forms the main docking site for trigger factor binding to the ribosome. The chain is Large ribosomal subunit protein uL23 from Prochlorococcus marinus (strain MIT 9515).